The sequence spans 190 residues: High affinity copper uptake protein 1 (190 aa).

The tract at residues 1–35 (MDHSHHMGMSYMDSNSTMQPSHHHPTTSASHSHGG) is disordered. The Extracellular segment spans residues 1 to 61 (MDHSHHMGMS…KNVELLFSGL (61 aa)). A Bis-His motif motif is present at residues 5–6 (HH). Positions 7 to 12 (MGMSYM) match the Methionine segments (Mets) motif motif. Asn-15 carries N-linked (GlcNAc...) asparagine glycosylation. Residues 26 to 35 (TTSASHSHGG) show a composition bias toward low complexity. O-linked (GalNAc...) threonine glycosylation is present at Thr-27. A helical membrane pass occupies residues 62 to 82 (VINTAGEMAGAFVAVFLLAMF). The Cytoplasmic segment spans residues 83–132 (YEGLKIARESLLRKSQVSIRYNSMPVPGPNGTILMETHKTVGQQMLSFPH). Residue Thr-114 is modified to Phosphothreonine. The helical transmembrane segment at 133 to 153 (LLQTVLHIIQVVISYFLMLIF) threads the bilayer. Over 154 to 156 (MTY) the chain is Extracellular. A helical membrane pass occupies residues 157–177 (NGYLCIAVAAGAGTGYFLFSW). At 178–190 (KKAVVVDITEHCH) the chain is on the cytoplasmic side. Cys-189 bears the Cysteine sulfenic acid (-SOH) mark.

Belongs to the copper transporter (Ctr) (TC 1.A.56) family. SLC31A subfamily. As to quaternary structure, homotrimer; is stabilized by cisplatin via interactions between cisplatin and the methionine-rich clusters, and could be crucial for the copper(2+) reduction process and copper(1+) stabilization. Heterotrimer between SLC31A1, CCS and SOD1; this heterotrimer is copper(1+)-mediated and its maintenance is regulated through SOD1 activation. Interacts with KDR; this interaction is induced upon VEGFA stimulation leading to SLC31A1 and KDR subsequent co-internalization to early endosomes, thereby activating KDR downstream signaling in endothelial cells. Interacts (via C-terminal domain) with ATOX1 (via dimer form); this interaction improves ATOX1 stability and controls intracellular copper(1+) levels. Interacts with SLC31A2; this interaction stabilizes SLC31A2 and protects its from ubiquitination and degradation. Interacts (via C-terminal domain) with CCS; this interaction is copper(1+)-mediated. Post-translationally, O-Glycosylation at Thr-27 protects from proteolytic cleavage in the N-terminal extracellular domain. Proteolytic cleavage, leading to a truncated form, is facilitated by SLC31A2 and initiated preferentially by CTSL and to a minor extend by CTSB in endolysosomal compartments. In vitro, is cleaved by CTSL/cathepsin L between residues 8 and 9 from the amino terminus. A post-CTSL/cathepsin L processing occurs to yield to the fully truncated form. In terms of processing, sulfenylated at Cys-189 after stimulation with VEGFA, which induces SLC31A1-KDR disulfide bond formation and their co-internalization to early endosomes, driving to a sustained VEGFR2 signaling.

The protein localises to the cell membrane. The protein resides in the early endosome membrane. It is found in the recycling endosome membrane. It localises to the apical cell membrane. Its subcellular location is the late endosome membrane. The protein localises to the basolateral cell membrane. It catalyses the reaction Ag(+)(out) = Ag(+)(in). The enzyme catalyses Cu(+)(out) = Cu(+)(in). Its activity is regulated as follows. Copper(1+) transport is stimulated by extracellular acidic pH and high potassium ions concentrations. Copper(1+) import is regulated by a copper(1+)-dependent recycling of SLC31A1. Uniporter that mediates the transport of copper(1+) from the extracellular space to the cytoplasm, across the plasma membrane and delivers directly copper(1+) to specific chaperone such as ATOX1, via a copper(1+)- mediated transient interaction between the C-terminal domain and a copper(1+) chaperone, thus controlling intracellular copper(1+) levels. May function in copper(1+) import from the apical membrane thus may drive intestinal copper absorption. The copper(1+) transport mechanism is sodium-independent, saturable and of high-affinity. Also mediates the uptake of silver(1+). May function in the influx of the platinum-containing chemotherapeutic agents. The platinum-containing chemotherapeutic agents uptake is saturable. In vitro, mediates the transport of cadmium(2+) into cells. Also participates in the first step of copper(2+) acquisition by cells through a direct transfer of copper(2+) from copper(2+) carriers in blood, such as ALB to the N-terminal domain of SLC31A1, leading to copper(2+) reduction and probably followed by copper(1+) stabilization. In addition, functions as a redox sensor to promote angiogenesis in endothelial cells, in a copper(1+) transport independent manner, by transmitting the VEGF-induced ROS signal through a sulfenylation at Cys-189 leadin g to a subsequent disulfide bond formation between SLC31A1 and KDR. The SLC31A1-KDR complex is then co-internalized to early endosomes, driving a sustained VEGFR2 signaling. Its function is as follows. Mobilizes copper(1+) out of the endosomal compartment, making copper(1+) available for export out of the cells. This chain is High affinity copper uptake protein 1, found in Homo sapiens (Human).